The following is a 616-amino-acid chain: Large ribosomal subunit assembly factor BipA (616 aa).

The tr-type G domain maps to 8–204; the sequence is KKLRNIAIIA…AIVKHVEPPK (197 aa). GTP-binding positions include 20–25 and 134–137; these read DHGKTT and NKVD.

The protein belongs to the TRAFAC class translation factor GTPase superfamily. Classic translation factor GTPase family. BipA subfamily. Monomer.

It is found in the cytoplasm. The catalysed reaction is GTP + H2O = GDP + phosphate + H(+). In terms of biological role, a 50S ribosomal subunit assembly protein with GTPase activity, required for 50S subunit assembly at low temperatures, may also play a role in translation. Binds GTP and analogs. Binds the 70S ribosome between the 30S and 50S subunits, in a similar position as ribosome-bound EF-G; it contacts a number of ribosomal proteins, both rRNAs and the A-site tRNA. The polypeptide is Large ribosomal subunit assembly factor BipA (Haemophilus influenzae (strain ATCC 51907 / DSM 11121 / KW20 / Rd)).